We begin with the raw amino-acid sequence, 78 residues long: Toxin OAIP 5 (78 aa).

An N-terminal signal peptide occupies residues 1–19 (MLIVILTCALLVIYHAAAA). Positions 20-40 (EELEAKDVIESKALATLDEER) are excised as a propeptide. Intrachain disulfides connect C43/C56, C47/C70, and C64/C75.

This sequence belongs to the neurotoxin 12 (Hwtx-2) family. 05 (OAIP-5) subfamily. Expressed by the venom gland.

The protein resides in the secreted. In terms of biological role, probable ion channel inhibitor. Shows insecticidal activity when injected into mealworms. The protein is Toxin OAIP 5 of Selenotypus plumipes (Australian featherleg tarantula).